A 968-amino-acid polypeptide reads, in one-letter code: RNA polymerase-associated protein RapA (968 aa).

One can recognise a Helicase ATP-binding domain in the interval 163–332 (EVGSRYAPRV…FARLRLLDPD (170 aa)). 176–183 (DEVGLGKT) is a binding site for ATP. A DEAH box motif is present at residues 278–281 (DEAH). The 165-residue stretch at 491-655 (RVDWLIEFLK…EFADELINVL (165 aa)) folds into the Helicase C-terminal domain.

It belongs to the SNF2/RAD54 helicase family. RapA subfamily. In terms of assembly, interacts with the RNAP. Has a higher affinity for the core RNAP than for the holoenzyme. Its ATPase activity is stimulated by binding to RNAP.

Functionally, transcription regulator that activates transcription by stimulating RNA polymerase (RNAP) recycling in case of stress conditions such as supercoiled DNA or high salt concentrations. Probably acts by releasing the RNAP, when it is trapped or immobilized on tightly supercoiled DNA. Does not activate transcription on linear DNA. Probably not involved in DNA repair. This chain is RNA polymerase-associated protein RapA, found in Shewanella frigidimarina (strain NCIMB 400).